We begin with the raw amino-acid sequence, 35 residues long: Kappa-theraphotoxin-Tb1a (35 aa).

3 disulfide bridges follow: Cys3–Cys18, Cys10–Cys23, and Cys17–Cys30.

Belongs to the neurotoxin 10 (Hwtx-1) family. 59 (Tltx) subfamily. Monomer. In terms of tissue distribution, expressed by the venom gland.

The protein resides in the secreted. Its function is as follows. Blocks Kv4.2/KCND2 voltage-gated potassium channels (IC(50) is 193.0 nM) by shifting the voltage-dependence of channel activation to more depolarized potentials. The toxin is thought to bind to the S3-S4 linker region of the voltage sensor domain. The polypeptide is Kappa-theraphotoxin-Tb1a (Theraphosa blondi (Goliath birdeating spider)).